The chain runs to 394 residues: Chorismate synthase (394 aa).

Arg-48 lines the NADP(+) pocket. The tract at residues 52–90 is disordered; sequence QSMITTSRGEPDEVSIQSGLQDGYTTGTPIGMTIENKDA. The span at 66-79 shows a compositional bias: polar residues; sequence SIQSGLQDGYTTGT. FMN-binding positions include 125–127, Gly-297, 312–316, and Arg-339; these read RSS and HAPTS.

It belongs to the chorismate synthase family. Requires FMNH2 as cofactor.

It catalyses the reaction 5-O-(1-carboxyvinyl)-3-phosphoshikimate = chorismate + phosphate. It participates in metabolic intermediate biosynthesis; chorismate biosynthesis; chorismate from D-erythrose 4-phosphate and phosphoenolpyruvate: step 7/7. Catalyzes the anti-1,4-elimination of the C-3 phosphate and the C-6 proR hydrogen from 5-enolpyruvylshikimate-3-phosphate (EPSP) to yield chorismate, which is the branch point compound that serves as the starting substrate for the three terminal pathways of aromatic amino acid biosynthesis. This reaction introduces a second double bond into the aromatic ring system. This is Chorismate synthase from Halobacterium salinarum (strain ATCC 700922 / JCM 11081 / NRC-1) (Halobacterium halobium).